The following is a 466-amino-acid chain: Keratin, type II cytoskeletal 7 (466 aa).

Serine 2 bears the N-acetylserine mark. Phosphoserine is present on residues serine 2 and serine 7. The interval 2–91 (SLHFGSQVFS…DPSIQQVRQE (90 aa)) is head. A glycan (O-linked (GlcNAc) serine) is linked at serine 12. The residue at position 20 (arginine 20) is a Dimethylated arginine; alternate. Residue arginine 20 is modified to Omega-N-methylarginine; alternate. Phosphoserine occurs at positions 54, 72, and 84. Residues 91-127 (EEREQIKTLNNKFASFIDKVRFLEQQNKLLETKWALL) form a coil 1A region. The IF rod domain occupies 92–404 (EREQIKTLNN…KLLEGEESRL (313 aa)). Threonine 98 is subject to Phosphothreonine. Residues 128–145 (QEQKSAKSNRLPGIFEAQ) form a linker 1 region. Residue lysine 131 forms a Glycyl lysine isopeptide (Lys-Gly) (interchain with G-Cter in SUMO2) linkage. The tract at residues 146-237 (IAGLRKQLEA…TLYEQELKEL (92 aa)) is coil 1B. Lysine 180 is modified (N6-acetyllysine). A linker 12 region spans residues 238-261 (QSEVSDTSVVLSMDNNRSLDLDSI). Phosphoserine is present on serine 255. The interval 262–400 (IAEVKAQYEE…ATYRKLLEGE (139 aa)) is coil 2. Glycyl lysine isopeptide (Lys-Gly) (interchain with G-Cter in SUMO2) cross-links involve residues lysine 266 and lysine 287. The residue at position 290 (threonine 290) is a Phosphothreonine. Residues lysine 297 and lysine 332 each participate in a glycyl lysine isopeptide (Lys-Gly) (interchain with G-Cter in SUMO2) cross-link. Positions 401–466 (ESRLTGDGVG…TSATSRSPRK (66 aa)) are tail.

It belongs to the intermediate filament family. In terms of assembly, heterotetramer of two type I and two type II keratins. Interacts with eukaryotic translation initiator factor 3 (eIF3) subunit EIF3S10. Interacts with GPER1. Arg-20 is dimethylated, probably to asymmetric dimethylarginine.

Blocks interferon-dependent interphase and stimulates DNA synthesis in cells. The sequence is that of Keratin, type II cytoskeletal 7 from Bos taurus (Bovine).